The chain runs to 398 residues: Phosphoglycerate kinase (398 aa).

Residues 23 to 25 (DFN), R38, 61 to 64 (HMGK), R122, and R155 contribute to the substrate site. ATP-binding positions include K206, G297, E328, and 354–357 (GGDS).

This sequence belongs to the phosphoglycerate kinase family. In terms of assembly, monomer.

It is found in the cytoplasm. It carries out the reaction (2R)-3-phosphoglycerate + ATP = (2R)-3-phospho-glyceroyl phosphate + ADP. The protein operates within carbohydrate degradation; glycolysis; pyruvate from D-glyceraldehyde 3-phosphate: step 2/5. In Clostridium botulinum (strain Hall / ATCC 3502 / NCTC 13319 / Type A), this protein is Phosphoglycerate kinase.